Reading from the N-terminus, the 302-residue chain is L-threonate dehydrogenase (302 aa).

NAD(+) is bound by residues 7–35 (FHVG…TWGA) and threonine 102. Lysine 178 is a catalytic residue. Residue lysine 246 participates in NAD(+) binding.

The protein belongs to the HIBADH-related family. L-threonate dehydrogenase subfamily.

It carries out the reaction L-threonate + NAD(+) = 2-dehydro-L-erythronate + NADH + H(+). Functionally, catalyzes oxidation of L-threonate to 2-oxo-tetronate. Can use either NAD(+) or NADP(+) as cosubstrate, with a preference for NAD(+). This Escherichia coli O6:H1 (strain CFT073 / ATCC 700928 / UPEC) protein is L-threonate dehydrogenase.